A 635-amino-acid polypeptide reads, in one-letter code: Chaperone protein DnaK (635 aa).

Threonine 198 carries the post-translational modification Phosphothreonine; by autocatalysis. Residues 606 to 635 (QATAASPGAEAPKADDDVVDAEFSEVDENK) form a disordered region. Residues 622–635 (DVVDAEFSEVDENK) are compositionally biased toward acidic residues.

It belongs to the heat shock protein 70 family.

Acts as a chaperone. This Novosphingobium aromaticivorans (strain ATCC 700278 / DSM 12444 / CCUG 56034 / CIP 105152 / NBRC 16084 / F199) protein is Chaperone protein DnaK.